A 113-amino-acid chain; its full sequence is Protein SPIRAL1-like 1 (113 aa).

Residues 1 to 12 show a composition bias toward gly residues; the sequence is MGRGVSVGGGQS. Residues 1–50 form a disordered region; that stretch reads MGRGVSVGGGQSSLGYLFGSGEAPKPAINNAPAPSSETLPISADPSPKHV. The span at 23 to 34 shows a compositional bias: low complexity; it reads APKPAINNAPAP. Serine 69 carries the phosphoserine modification. Residues 79–113 form a disordered region; it reads QNTGNFLTDRPSTKVHAAPGGGSSLDYLFGGGGSN. A compositionally biased stretch (gly residues) spans 97–113; the sequence is PGGGSSLDYLFGGGGSN.

This sequence belongs to the SPIRAL1 family. In terms of tissue distribution, detected in pollen of mature flowers.

Acts redundantly with SPR1 in maintaining the cortical microtubules organization essential for anisotropic cell growth. The polypeptide is Protein SPIRAL1-like 1 (SP1L1) (Arabidopsis thaliana (Mouse-ear cress)).